We begin with the raw amino-acid sequence, 318 residues long: Formimidoylglutamase (318 aa).

His130, Asp155, His157, Asp159, Asp246, and Asp248 together coordinate Mn(2+).

The protein belongs to the arginase family. It depends on Mn(2+) as a cofactor.

The enzyme catalyses N-formimidoyl-L-glutamate + H2O = formamide + L-glutamate. It functions in the pathway amino-acid degradation; L-histidine degradation into L-glutamate; L-glutamate from N-formimidoyl-L-glutamate (hydrolase route): step 1/1. Functionally, catalyzes the conversion of N-formimidoyl-L-glutamate to L-glutamate and formamide. The sequence is that of Formimidoylglutamase from Klebsiella pneumoniae (strain 342).